We begin with the raw amino-acid sequence, 308 residues long: Olfactory receptor 2T6 (308 aa).

Residues 1-28 (MNENNETLTRGFTLMGLFTHNKCSGFFF) lie on the Extracellular side of the membrane. A glycan (N-linked (GlcNAc...) asparagine) is linked at Asn5. A helical membrane pass occupies residues 29-49 (GVICAVFFMAMIANGVMIFLI). The Cytoplasmic portion of the chain corresponds to 50–57 (NIDPHLHT). Residues 58–78 (PMYFLLSHLSVIDTLYISTIV) traverse the membrane as a helical segment. The Extracellular portion of the chain corresponds to 79 to 98 (PKMLVDYLMGEGTISFIACT). A disulfide bond links Cys97 and Cys179. Residues 99–119 (AQCFLYMGFMGAEFFLLGLMA) traverse the membrane as a helical segment. The Cytoplasmic portion of the chain corresponds to 120 to 145 (YDRYVAICNPLRYPVLISWRVCWMIL). The chain crosses the membrane as a helical span at residues 146–166 (ASSWFGGALDSFLLTPITMSL). The Extracellular segment spans residues 167-203 (PFCASHQINHFFCEAPTMLRLACGDKTTYETVMYVCC). The helical transmembrane segment at 204–224 (VAMLLIPFSVVTASYTRILIT) threads the bilayer. At 225–236 (VHQMTSAEGRKK) the chain is on the cytoplasmic side. Residues 237 to 257 (AFATCSSHMMVVTLFYGAALY) form a helical membrane-spanning segment. The Extracellular portion of the chain corresponds to 258-271 (TYTLPQSYHTPIKD). The helical transmembrane segment at 272 to 292 (KVFSAFYTILTPLLNPLIYSL) threads the bilayer. Over 293–308 (RNRDVMGALKRVVARC) the chain is Cytoplasmic.

The protein belongs to the G-protein coupled receptor 1 family.

It is found in the cell membrane. In terms of biological role, odorant receptor. The protein is Olfactory receptor 2T6 (OR2T6) of Homo sapiens (Human).